Here is a 268-residue protein sequence, read N- to C-terminus: Energy-coupling factor transporter transmembrane protein EcfT (268 aa).

Transmembrane regions (helical) follow at residues 28-48 (FVFL…YLWV), 63-83 (LWFL…TLMM), 107-127 (ILEG…ATIM), 152-172 (LPVH…PTLM), and 248-268 (ISLT…YSGV).

The protein belongs to the energy-coupling factor EcfT family. In terms of assembly, forms a stable energy-coupling factor (ECF) transporter complex composed of 2 membrane-embedded substrate-binding proteins (S component), 2 ATP-binding proteins (A component) and 2 transmembrane proteins (T component). May be able to interact with more than 1 S component at a time.

It is found in the cell membrane. Transmembrane (T) component of an energy-coupling factor (ECF) ABC-transporter complex. Unlike classic ABC transporters this ECF transporter provides the energy necessary to transport a number of different substrates. This chain is Energy-coupling factor transporter transmembrane protein EcfT, found in Staphylococcus aureus (strain 04-02981).